We begin with the raw amino-acid sequence, 398 residues long: 2-amino-3-ketobutyrate coenzyme A ligase (398 aa).

111–112 (CF) contacts pyridoxal 5'-phosphate. H136 lines the substrate pocket. Pyridoxal 5'-phosphate is bound by residues S185, 210 to 213 (DDSH), 241 to 244 (TLGK), and 274 to 275 (SN). K244 is subject to N6-(pyridoxal phosphate)lysine. Substrate is bound at residue R368.

This sequence belongs to the class-II pyridoxal-phosphate-dependent aminotransferase family. As to quaternary structure, homodimer. Pyridoxal 5'-phosphate serves as cofactor.

The catalysed reaction is glycine + acetyl-CoA = (2S)-2-amino-3-oxobutanoate + CoA. Its pathway is amino-acid degradation; L-threonine degradation via oxydo-reductase pathway; glycine from L-threonine: step 2/2. Its function is as follows. Catalyzes the cleavage of 2-amino-3-ketobutyrate to glycine and acetyl-CoA. In Escherichia coli (strain K12), this protein is 2-amino-3-ketobutyrate coenzyme A ligase.